The sequence spans 426 residues: MLDSKLLRTQLQDVADRLASRGFTLDVARIESLEAQRKVVQTRTEQLQAERNARSKSIGQAKQRGEDIAPLMADVERMGNELSEGKVELDGIQAELDALVLSIPNLPHESVPVGADEEGNVEVRRWGTPTAFDFEVKDHVALGEKFGWLDFETAAKLSGARFALLRGPIARLHRALAQFMINLHINEHGYEETYTPYLVQAPALQGTGQLPKFEEDLFKITREGEADLYLIPTAEVSLTNIVSGEILDAKQLPLKFVAHTPCFRSEAGASGRDTRGMIRQHQFDKVEMVQIVAPEDSMAALESLTGNAERVLQLLELPYRTLALCTGDMGFSAVKTYDLEVWIPSQDKYREISSCSNCGDFQARRMQARWRNPETGKPELVHTLNGSGLAVGRTLVAVLENYQQADGSIRVPEVLKPYMGGLEVIG.

T233–E235 is a binding site for L-serine. ATP is bound at residue R264–E266. Position 287 (E287) interacts with L-serine. E351–S354 contributes to the ATP binding site. S387 lines the L-serine pocket.

Belongs to the class-II aminoacyl-tRNA synthetase family. Type-1 seryl-tRNA synthetase subfamily. Homodimer. The tRNA molecule binds across the dimer.

It is found in the cytoplasm. It carries out the reaction tRNA(Ser) + L-serine + ATP = L-seryl-tRNA(Ser) + AMP + diphosphate + H(+). The catalysed reaction is tRNA(Sec) + L-serine + ATP = L-seryl-tRNA(Sec) + AMP + diphosphate + H(+). It participates in aminoacyl-tRNA biosynthesis; selenocysteinyl-tRNA(Sec) biosynthesis; L-seryl-tRNA(Sec) from L-serine and tRNA(Sec): step 1/1. In terms of biological role, catalyzes the attachment of serine to tRNA(Ser). Is also able to aminoacylate tRNA(Sec) with serine, to form the misacylated tRNA L-seryl-tRNA(Sec), which will be further converted into selenocysteinyl-tRNA(Sec). The chain is Serine--tRNA ligase from Pseudomonas savastanoi pv. phaseolicola (strain 1448A / Race 6) (Pseudomonas syringae pv. phaseolicola (strain 1448A / Race 6)).